Reading from the N-terminus, the 446-residue chain is tRNA modification GTPase MnmE (446 aa).

The (6S)-5-formyl-5,6,7,8-tetrahydrofolate site is built by Arg-22, Glu-80, and Lys-119. In terms of domain architecture, TrmE-type G spans 215–370 (GLSLVIAGRP…LKKVIKQVVG (156 aa)). Residue Asn-225 coordinates K(+). GTP-binding positions include 225-230 (NAGKST), 244-250 (TEIAGTT), and 269-272 (DTAG). Ser-229 is a Mg(2+) binding site. Thr-244, Ile-246, and Thr-249 together coordinate K(+). Thr-250 contacts Mg(2+). Residue Lys-446 participates in (6S)-5-formyl-5,6,7,8-tetrahydrofolate binding.

The protein belongs to the TRAFAC class TrmE-Era-EngA-EngB-Septin-like GTPase superfamily. TrmE GTPase family. In terms of assembly, homodimer. Heterotetramer of two MnmE and two MnmG subunits. K(+) is required as a cofactor.

It localises to the cytoplasm. Functionally, exhibits a very high intrinsic GTPase hydrolysis rate. Involved in the addition of a carboxymethylaminomethyl (cmnm) group at the wobble position (U34) of certain tRNAs, forming tRNA-cmnm(5)s(2)U34. In Legionella pneumophila (strain Corby), this protein is tRNA modification GTPase MnmE.